A 287-amino-acid chain; its full sequence is 4,4'-diapophytoene synthase (287 aa).

(2E,6E)-farnesyl diphosphate is bound by residues 18 to 21 (HSKS), tyrosine 41, and arginine 45. Positions 48 and 52 each coordinate Mg(2+). (2E,6E)-farnesyl diphosphate is bound at residue glutamine 165. Mg(2+) is bound at residue asparagine 168. (2E,6E)-farnesyl diphosphate is bound at residue arginine 171. A Mg(2+)-binding site is contributed by aspartate 172. Tyrosine 248 contributes to the (2E,6E)-farnesyl diphosphate binding site.

Belongs to the phytoene/squalene synthase family. CrtM subfamily. Mg(2+) serves as cofactor.

It catalyses the reaction 2 (2E,6E)-farnesyl diphosphate = 15-cis-4,4'-diapophytoene + 2 diphosphate. The protein operates within carotenoid biosynthesis; staphyloxanthin biosynthesis; staphyloxanthin from farnesyl diphosphate: step 1/5. In terms of biological role, involved in the biosynthesis of the yellow-orange carotenoid staphyloxanthin, which plays a role in the virulence via its protective function against oxidative stress. Catalyzes the head-to-head condensation of two molecules of farnesyl diphosphate (FPP) into the colorless C(30) carotenoid 4,4'-diapophytoene (dehydrosqualene). This is 4,4'-diapophytoene synthase from Staphylococcus aureus (strain NCTC 8325 / PS 47).